Consider the following 210-residue polypeptide: MPVEIPRDLTPELVPLSWLLGQWEGQGRLGTGEAESEHFFQRVTFSSNGLPYLEYVAESWLTDEEGMKLRPLSVEMGFWALDRKLGEADGGPGLIPADIVPALTTADDVEKLRNDTSGFDITATIVHPGGISELYYGTIKGPQIELSTDAVMRGAGAKDYSAATRIFGLVNGDLFWRWDVAAEGNSLEAHASAILKKTAAPESAEQRPSE.

Positions 21-27 (GQWEGQG) match the GXWXGXG motif. Histidine 190 contributes to the heme b binding site.

Belongs to the nitrobindin family. As to quaternary structure, homodimer. It depends on heme b as a cofactor.

The catalysed reaction is peroxynitrite = nitrate. The protein operates within nitrogen metabolism. Functionally, heme-binding protein able to scavenge peroxynitrite and to protect free L-tyrosine against peroxynitrite-mediated nitration, by acting as a peroxynitrite isomerase that converts peroxynitrite to nitrate. Therefore, this protein likely plays a role in peroxynitrite sensing and in the detoxification of reactive nitrogen and oxygen species (RNS and ROS, respectively). Is able to bind nitric oxide (NO) in vitro, but may act as a sensor of peroxynitrite levels in vivo. In Renibacterium salmoninarum (strain ATCC 33209 / DSM 20767 / JCM 11484 / NBRC 15589 / NCIMB 2235), this protein is Peroxynitrite isomerase.